The chain runs to 146 residues: Hemoglobin subunit beta (146 aa).

Residues 2-146 enclose the Globin domain; sequence HWTADEKQLI…VAHALALGYH (145 aa). Heme b is bound by residues His-63 and His-92.

This sequence belongs to the globin family. In terms of assembly, heterotetramer of two alpha chains and two beta chains. As to expression, red blood cells.

Involved in oxygen transport from the lung to the various peripheral tissues. The protein is Hemoglobin subunit beta (HBB) of Chrysemys picta bellii (Western painted turtle).